The primary structure comprises 358 residues: Phosphoserine aminotransferase (358 aa).

Residue Arg-41 coordinates L-glutamate. Residues Ala-75–Ser-76, Trp-100, Thr-148, Asp-167, and Gln-190 each bind pyridoxal 5'-phosphate. An N6-(pyridoxal phosphate)lysine modification is found at Lys-191. Asn-233–Thr-234 serves as a coordination point for pyridoxal 5'-phosphate.

It belongs to the class-V pyridoxal-phosphate-dependent aminotransferase family. SerC subfamily. Homodimer. Requires pyridoxal 5'-phosphate as cofactor.

The protein resides in the cytoplasm. The catalysed reaction is O-phospho-L-serine + 2-oxoglutarate = 3-phosphooxypyruvate + L-glutamate. The enzyme catalyses 4-(phosphooxy)-L-threonine + 2-oxoglutarate = (R)-3-hydroxy-2-oxo-4-phosphooxybutanoate + L-glutamate. It functions in the pathway amino-acid biosynthesis; L-serine biosynthesis; L-serine from 3-phospho-D-glycerate: step 2/3. It participates in cofactor biosynthesis; pyridoxine 5'-phosphate biosynthesis; pyridoxine 5'-phosphate from D-erythrose 4-phosphate: step 3/5. Functionally, catalyzes the reversible conversion of 3-phosphohydroxypyruvate to phosphoserine and of 3-hydroxy-2-oxo-4-phosphonooxybutanoate to phosphohydroxythreonine. The chain is Phosphoserine aminotransferase from Campylobacter jejuni subsp. jejuni serotype O:2 (strain ATCC 700819 / NCTC 11168).